Reading from the N-terminus, the 99-residue chain is Large ribosomal subunit protein uL23 (99 aa).

Belongs to the universal ribosomal protein uL23 family. As to quaternary structure, part of the 50S ribosomal subunit. Contacts protein L29, and trigger factor when it is bound to the ribosome.

In terms of biological role, one of the early assembly proteins it binds 23S rRNA. One of the proteins that surrounds the polypeptide exit tunnel on the outside of the ribosome. Forms the main docking site for trigger factor binding to the ribosome. The sequence is that of Large ribosomal subunit protein uL23 from Pseudomonas fluorescens (strain SBW25).